The chain runs to 511 residues: Maturase K (511 aa).

It belongs to the intron maturase 2 family. MatK subfamily.

The protein resides in the plastid. It is found in the chloroplast. Functionally, usually encoded in the trnK tRNA gene intron. Probably assists in splicing its own and other chloroplast group II introns. This Hordeum vulgare (Barley) protein is Maturase K.